Consider the following 88-residue polypeptide: Small ribosomal subunit protein uS15 (88 aa).

This sequence belongs to the universal ribosomal protein uS15 family. In terms of assembly, part of the 30S ribosomal subunit. Forms a bridge to the 50S subunit in the 70S ribosome, contacting the 23S rRNA.

One of the primary rRNA binding proteins, it binds directly to 16S rRNA where it helps nucleate assembly of the platform of the 30S subunit by binding and bridging several RNA helices of the 16S rRNA. Its function is as follows. Forms an intersubunit bridge (bridge B4) with the 23S rRNA of the 50S subunit in the ribosome. The protein is Small ribosomal subunit protein uS15 of Mycoplasmopsis agalactiae (strain NCTC 10123 / CIP 59.7 / PG2) (Mycoplasma agalactiae).